The sequence spans 294 residues: TBC1 domain family member 7 (294 aa).

Residues 50-232 (PLPSMYRIHV…RVWDKVISGS (183 aa)) enclose the Rab-GAP TBC domain.

As to quaternary structure, component of the TSC-TBC complex (also named Rhebulator complex), composed of 2 molecules of TSC1, 2 molecules of TSC2 and 1 molecule of TBC1D7.

The protein resides in the lysosome membrane. Its subcellular location is the cytoplasmic vesicle. It localises to the cytoplasm. The protein localises to the cytosol. In terms of biological role, non-catalytic component of the TSC-TBC complex, a multiprotein complex that acts as a negative regulator of the canonical mTORC1 complex, an evolutionarily conserved central nutrient sensor that stimulates anabolic reactions and macromolecule biosynthesis to promote cellular biomass generation and growth. The TSC-TBC complex acts as a GTPase-activating protein (GAP) for the small GTPase RHEB, a direct activator of the protein kinase activity of mTORC1. In absence of nutrients, the TSC-TBC complex inhibits mTORC1, thereby preventing phosphorylation of ribosomal protein S6 kinase (RPS6KB1 and RPS6KB2) and EIF4EBP1 (4E-BP1) by the mTORC1 signaling. The TSC-TBC complex is inactivated in response to nutrients, relieving inhibition of mTORC1. The sequence is that of TBC1 domain family member 7 (tbc1d7) from Danio rerio (Zebrafish).